The chain runs to 446 residues: ATP synthase subunit b-delta (446 aa).

The interval 1–168 (MSTFIGQLVG…PKGADVEYPL (168 aa)) is ATP synthase subunit b. A helical membrane pass occupies residues 4 to 24 (FIGQLVGFAAIVYLVWWYVVP). An ATP synthase subunit delta region spans residues 169–446 (LAKMRSASRR…LVAAEAALPD (278 aa)).

The protein in the N-terminal section; belongs to the ATPase B chain family. In the C-terminal section; belongs to the ATPase delta chain family. F-type ATPases have 2 components, F(1) - the catalytic core - and F(0) - the membrane proton channel. F(1) has five subunits: alpha(3), beta(3), gamma(1), delta(1), epsilon(1). F(0) has three main subunits: a(1), b(2) and c(10-14). The alpha and beta chains form an alternating ring which encloses part of the gamma chain. F(1) is attached to F(0) by a central stalk formed by the gamma and epsilon chains, while a peripheral stalk is formed by the delta and b chains.

It is found in the cell membrane. Its function is as follows. F(1)F(0) ATP synthase produces ATP from ADP in the presence of a proton or sodium gradient. F-type ATPases consist of two structural domains, F(1) containing the extramembraneous catalytic core and F(0) containing the membrane proton channel, linked together by a central stalk and a peripheral stalk. During catalysis, ATP synthesis in the catalytic domain of F(1) is coupled via a rotary mechanism of the central stalk subunits to proton translocation. This fusion protein includes a component of the F(0) channel (subunit b) and of the F(1) subunit (subunit delta). Two copies of subunit b and one of delta together form the peripheral 'stator' stalk which links F(1) to F(0). In Mycobacterium leprae (strain Br4923), this protein is ATP synthase subunit b-delta (atpFH).